The chain runs to 120 residues: Large ribosomal subunit protein bL17 (120 aa).

It belongs to the bacterial ribosomal protein bL17 family. As to quaternary structure, part of the 50S ribosomal subunit. Contacts protein L32.

This Shouchella clausii (strain KSM-K16) (Alkalihalobacillus clausii) protein is Large ribosomal subunit protein bL17.